The following is a 126-amino-acid chain: UPF0538 protein C2orf76 homolog (126 aa).

Belongs to the UPF0538 family.

In Xenopus tropicalis (Western clawed frog), this protein is UPF0538 protein C2orf76 homolog.